An 814-amino-acid chain; its full sequence is Probable G-protein coupled receptor 156 (814 aa).

The Extracellular portion of the chain corresponds to 1–47 (MEPEINCSELCDSFPGQELDRRPLHDLCKTTITSSHHSSKTISSLSP). N-linked (GlcNAc...) asparagine glycosylation occurs at Asn-6. A helical transmembrane segment spans residues 48–68 (VLLGIVWTFLSCGLLLILFFL). The Cytoplasmic segment spans residues 69-86 (AFTIHCRKNRIVKMSSPN). The helical transmembrane segment at 87–107 (LNIVTLLGSCLTYSSAYLFGI) threads the bilayer. Residues 108–118 (QDVLVGSSMET) lie on the Extracellular side of the membrane. Residues 119 to 139 (LIQTRLSMLCIGTSLVFGPIL) form a helical membrane-spanning segment. At 140–164 (GKSWRLYKVFTQRVPDKRVIIKDLQ) the chain is on the cytoplasmic side. A helical membrane pass occupies residues 165 to 185 (LLGLVAALLMADVILLMTWVL). The Extracellular segment spans residues 186 to 222 (TDPIQCLQILSVSMTVTGKDVSCTSTSTHFCASRYSD). The helical transmembrane segment at 223–243 (VWIALIWGCKGLLLLYGAYLA) threads the bilayer. Residues 244-257 (GLTGHVSSPPVNQS) are Cytoplasmic-facing. The chain crosses the membrane as a helical span at residues 258-278 (LTIMVGVNLLVLAAGLLFVVT). The Extracellular portion of the chain corresponds to 279–288 (RYLHSWPNLV). Residues 289–309 (FGLTSGGIFVCTTTINCFIFI) traverse the membrane as a helical segment. Residues 310 to 814 (PQLKQWKAFE…FKDDLKPTLV (505 aa)) are Cytoplasmic-facing. Residues 354–390 (EKSSMERLLTEKNAVIESLQEQVNNAKEKIVRLMSAE) adopt a coiled-coil conformation. Disordered stretches follow at residues 422–545 (AQGP…SSVI), 557–724 (GLGP…PEQW), and 769–792 (SSSD…LASW). Polar residues predominate over residues 443 to 454 (SQCTSGPSSYAQ). Positions 468-484 (GKEEKISDSKDFSDHLD) are enriched in basic and acidic residues. Polar residues predominate over residues 486–496 (GCSQKPWTEQS). Positions 523–545 (QRQRHLENSEEPPERRSRVSSVI) are enriched in basic and acidic residues. Residues 563-581 (SLSTAPSCHQQTWKNSAAF) are compositionally biased toward polar residues. The segment covering 599 to 610 (VRRRRAAQRARS) has biased composition (basic residues). Over residues 639–651 (NGDSPSLAPQTTD) the composition is skewed to polar residues. Residues 769–780 (SSSDSSDSGTSD) show a composition bias toward low complexity.

The protein belongs to the G-protein coupled receptor 3 family. GABA-B receptor subfamily. As to expression, ubiquitous expression both in the CNS and in peripheral tissues. Very high expression in fetal brain and testis relative to expression in other tissues.

The protein resides in the cell membrane. In terms of biological role, orphan G-protein coupled receptor involved in the regulation of hair cell orientation in mechanosensory organs of the inner ear. It is required to trigger a 180 degree reversal in hair cell orientation, creating a virtual line of polarity reversal (LPR) across which stereociliary bundles are arranged in opposite orientations. This is Probable G-protein coupled receptor 156 (GPR156) from Homo sapiens (Human).